Reading from the N-terminus, the 295-residue chain is sn-glycerol-3-phosphate transport system permease protein UgpA (295 aa).

Over 1–11 (MSSSRPVFRSR) the chain is Cytoplasmic. Residues 12-32 (WLPYLLVAPQLVITVIFFIWP) form a helical membrane-spanning segment. The Periplasmic portion of the chain corresponds to 33–80 (AGEALWYSLQSVDPFGFSSQFVGLENFVALFHDSYYLDAFWTTIKFSA). The ABC transmembrane type-1 domain maps to 76–284 (IKFSALVTFS…FLVIILTVVQ (209 aa)). Residues 81 to 101 (LVTFSGLLVSLFFAALVDYVV) form a helical membrane-spanning segment. Topologically, residues 102 to 109 (RGSRFYQT) are cytoplasmic. The chain crosses the membrane as a helical span at residues 110-130 (LMLLPYAVAPAVAAVLWIFLF). Residues 131–157 (NPGRGLITHFLGEFGYDWNHAQNSGQA) are Periplasmic-facing. Residues 158–178 (MFLVVFASVWKQISYNFLFFF) form a helical membrane-spanning segment. Topologically, residues 179 to 207 (AALQSIPRSLVEAAAIDGAGPIRRFFRLS) are cytoplasmic. Residues 208 to 228 (LPLIAPVSFFLLVVNLVYAFF) traverse the membrane as a helical segment. The Periplasmic portion of the chain corresponds to 229–262 (DTFPVIDAATAGGPVQATTTLIYKIYCEGFTGLD). A helical transmembrane segment spans residues 263-283 (LSASAAQSVVLMFLVIILTVV). Over 284–295 (QFRYVESKVRYQ) the chain is Cytoplasmic.

Belongs to the binding-protein-dependent transport system permease family. UgpAE subfamily. The complex is composed of two ATP-binding proteins (UgpC), two transmembrane proteins (UgpA and UgpE) and a solute-binding protein (UgpB).

The protein localises to the cell inner membrane. Its function is as follows. Part of the ABC transporter complex UgpBAEC involved in sn-glycerol-3-phosphate (G3P) import. Probably responsible for the translocation of the substrate across the membrane. This Salmonella typhi protein is sn-glycerol-3-phosphate transport system permease protein UgpA (ugpA).